Consider the following 234-residue polypeptide: Arsenate respiratory reductase iron-sulfur subunit ArrB (234 aa).

4Fe-4S ferredoxin-type domains follow at residues 3–32 (LGMV…NDGI), 48–79 (VKYT…KDKR), and 80–109 (GLTL…FNAA). Residues Cys-12, Cys-15, Cys-18, Cys-22, Cys-57, Cys-60, Cys-65, Cys-69, Cys-89, Cys-92, Cys-95, Cys-99, Cys-164, Cys-167, Cys-179, and Cys-183 each contribute to the [4Fe-4S] cluster site.

As to quaternary structure, heterodimer composed of one large subunit (ArrA) and one small subunit (ArrB). It depends on [4Fe-4S] cluster as a cofactor.

The protein resides in the periplasm. With respect to regulation, phosphate is a competitive inhibitor. In terms of biological role, component of the arsenate respiratory reductase (Arr) complex, which catalyzes the reduction of arsenate (As(V)) to arsenite (As(III)). ArrB is probably the electron transfer subunit. The periplasmic localization of this complex may allow the cell to couple arsenate reduction to energy production before arsenate can be transported to the cell cytoplasm and enter the ars detoxification pathway, an energy-requiring process. The sequence is that of Arsenate respiratory reductase iron-sulfur subunit ArrB from Shewanella sp. (strain ANA-3).